Here is a 62-residue protein sequence, read N- to C-terminus: Large ribosomal subunit protein uL29 (62 aa).

The protein belongs to the universal ribosomal protein uL29 family.

The protein is Large ribosomal subunit protein uL29 of Trichlorobacter lovleyi (strain ATCC BAA-1151 / DSM 17278 / SZ) (Geobacter lovleyi).